The sequence spans 156 residues: Small ribosomal subunit protein uS7 (156 aa).

Belongs to the universal ribosomal protein uS7 family. Part of the 30S ribosomal subunit. Contacts proteins S9 and S11.

Functionally, one of the primary rRNA binding proteins, it binds directly to 16S rRNA where it nucleates assembly of the head domain of the 30S subunit. Is located at the subunit interface close to the decoding center, probably blocks exit of the E-site tRNA. In Mycobacterium tuberculosis (strain CDC 1551 / Oshkosh), this protein is Small ribosomal subunit protein uS7.